The primary structure comprises 475 residues: Ribulose bisphosphate carboxylase large chain (475 aa).

Positions Met1–Ser2 are excised as a propeptide. Residue Pro3 is modified to N-acetylproline. Lys14 carries the N6,N6,N6-trimethyllysine modification. 2 residues coordinate substrate: Asn123 and Thr173. The active-site Proton acceptor is the Lys175. Residue Lys177 coordinates substrate. Lys201, Asp203, and Glu204 together coordinate Mg(2+). Lys201 carries the N6-carboxylysine modification. His294 serves as the catalytic Proton acceptor. Residues Arg295, His327, and Ser379 each contribute to the substrate site.

This sequence belongs to the RuBisCO large chain family. Type I subfamily. In terms of assembly, heterohexadecamer of 8 large chains and 8 small chains; disulfide-linked. The disulfide link is formed within the large subunit homodimers. Mg(2+) serves as cofactor. In terms of processing, the disulfide bond which can form in the large chain dimeric partners within the hexadecamer appears to be associated with oxidative stress and protein turnover.

The protein resides in the plastid. It localises to the chloroplast. The catalysed reaction is 2 (2R)-3-phosphoglycerate + 2 H(+) = D-ribulose 1,5-bisphosphate + CO2 + H2O. It catalyses the reaction D-ribulose 1,5-bisphosphate + O2 = 2-phosphoglycolate + (2R)-3-phosphoglycerate + 2 H(+). Functionally, ruBisCO catalyzes two reactions: the carboxylation of D-ribulose 1,5-bisphosphate, the primary event in carbon dioxide fixation, as well as the oxidative fragmentation of the pentose substrate in the photorespiration process. Both reactions occur simultaneously and in competition at the same active site. This chain is Ribulose bisphosphate carboxylase large chain, found in Populus trichocarpa (Western balsam poplar).